The primary structure comprises 185 residues: Virulence membrane protein PagC (185 aa).

The N-terminal stretch at Met1–Ala23 is a signal peptide.

Belongs to the outer membrane OOP (TC 1.B.6) superfamily. Ail family.

The protein localises to the cell outer membrane. In terms of biological role, essential for full virulence and survival within macrophages. The chain is Virulence membrane protein PagC (pagC) from Salmonella typhimurium (strain LT2 / SGSC1412 / ATCC 700720).